We begin with the raw amino-acid sequence, 276 residues long: F420-dependent methylenetetrahydromethanopterin dehydrogenase (276 aa).

Positions 253 to 276 (TVLRTPHGKEGKTLSKKDLLAKPE) are disordered. A compositionally biased stretch (basic and acidic residues) spans 259-276 (HGKEGKTLSKKDLLAKPE).

Belongs to the MTD family. In terms of assembly, found to be tightly associated with methyl-coenzyme M methylreductase.

The catalysed reaction is 5,10-methylenetetrahydromethanopterin + oxidized coenzyme F420-(gamma-L-Glu)(n) + 2 H(+) = 5,10-methenyl-5,6,7,8-tetrahydromethanopterin + reduced coenzyme F420-(gamma-L-Glu)(n). It functions in the pathway one-carbon metabolism; methanogenesis from CO(2); 5,10-methylene-5,6,7,8-tetrahydromethanopterin from 5,10-methenyl-5,6,7,8-tetrahydromethanopterin (coenzyme F420 route): step 1/1. Its activity is regulated as follows. Activity requires salt; 100 mM sodium or potassium salts of chloride, phosphate or sulfate are equally effective. Not inactivated by O(2). Inhibited by hydrogen-producing 5,10-methenyltetrahydromethanopterin hydrogenase which has a higher affinity for their shared substrate. Enzyme is O(2)-stable and strictly dependent on coenzyme F420. In terms of biological role, catalyzes the reversible reduction of methenyl-H(4)MPT(+) to methylene-H(4)MPT. In Methanothermobacter marburgensis (strain ATCC BAA-927 / DSM 2133 / JCM 14651 / NBRC 100331 / OCM 82 / Marburg) (Methanobacterium thermoautotrophicum), this protein is F420-dependent methylenetetrahydromethanopterin dehydrogenase.